Consider the following 161-residue polypeptide: Aklanonic acid methyl ester cyclase DauD (161 aa).

Substrate is bound at residue Gln-106. Residues 137 to 161 (WPTPEGWRPCPPPPRRRHDRSTDTP) form a disordered region.

It belongs to the polyketide cyclase DnrD family. Homotetramer.

The enzyme catalyses methyl aklanonate = aklaviketone. The protein operates within antibiotic biosynthesis; daunorubicin biosynthesis. It functions in the pathway antibiotic biosynthesis; carminomycin biosynthesis. It participates in antibiotic biosynthesis; rhodomycin biosynthesis. Its pathway is antibiotic biosynthesis; aclacinomycin biosynthesis. Its function is as follows. Involved in the biosynthesis of aklavinone which is an important precursor common to the formation of the clinically significant anthracyclines such as carminomycin, daunorubicin (daunomycin), rhodomycin, aclacinomycin T (aklavin) and aclacinomycin A (aclarubicin). These compounds are aromatic polyketide antibiotics that exhibit high cytotoxicity and are widely applied in the chemotherapy of a variety of cancers. Catalyzes the cyclization of aklanonic acid methyl ester to yield aklaviketone. This is Aklanonic acid methyl ester cyclase DauD (dauD) from Streptomyces sp. (strain C5).